Consider the following 236-residue polypeptide: Small ribosomal subunit protein uS2c (236 aa).

This sequence belongs to the universal ribosomal protein uS2 family.

It is found in the plastid. It localises to the chloroplast. The chain is Small ribosomal subunit protein uS2c (rps2) from Ceratophyllum demersum (Rigid hornwort).